We begin with the raw amino-acid sequence, 408 residues long: Serine/threonine-protein kinase ATG1t (408 aa).

Positions tyrosine 7–valine 272 constitute a Protein kinase domain. Residues leucine 13–valine 21 and lysine 36 each bind ATP. The active-site Proton acceptor is aspartate 129.

The protein belongs to the protein kinase superfamily. Ser/Thr protein kinase family.

It localises to the cytoplasmic vesicle. Its subcellular location is the autophagosome. Serine/threonine protein kinase involved in autophagy. The ATG1-ATG13 protein kinase complex regulates downstream events required for autophagosome enclosure and/or vacuolar delivery. This Arabidopsis thaliana (Mouse-ear cress) protein is Serine/threonine-protein kinase ATG1t.